We begin with the raw amino-acid sequence, 434 residues long: Enolase (434 aa).

Gln-163 is a binding site for (2R)-2-phosphoglycerate. Glu-205 serves as the catalytic Proton donor. Positions 242, 291, and 318 each coordinate Mg(2+). (2R)-2-phosphoglycerate contacts are provided by Lys-343, Arg-372, Ser-373, and Lys-394. Lys-343 (proton acceptor) is an active-site residue.

This sequence belongs to the enolase family. The cofactor is Mg(2+).

The protein localises to the cytoplasm. The protein resides in the secreted. Its subcellular location is the cell surface. It catalyses the reaction (2R)-2-phosphoglycerate = phosphoenolpyruvate + H2O. It participates in carbohydrate degradation; glycolysis; pyruvate from D-glyceraldehyde 3-phosphate: step 4/5. Catalyzes the reversible conversion of 2-phosphoglycerate (2-PG) into phosphoenolpyruvate (PEP). It is essential for the degradation of carbohydrates via glycolysis. The sequence is that of Enolase from Streptococcus thermophilus (strain ATCC BAA-491 / LMD-9).